An 871-amino-acid polypeptide reads, in one-letter code: Alanine--tRNA ligase (871 aa).

4 residues coordinate Zn(2+): His-590, His-594, Cys-694, and His-698.

This sequence belongs to the class-II aminoacyl-tRNA synthetase family. Requires Zn(2+) as cofactor.

It localises to the cytoplasm. It carries out the reaction tRNA(Ala) + L-alanine + ATP = L-alanyl-tRNA(Ala) + AMP + diphosphate. Functionally, catalyzes the attachment of alanine to tRNA(Ala) in a two-step reaction: alanine is first activated by ATP to form Ala-AMP and then transferred to the acceptor end of tRNA(Ala). Also edits incorrectly charged Ser-tRNA(Ala) and Gly-tRNA(Ala) via its editing domain. The chain is Alanine--tRNA ligase from Thermoplasma acidophilum (strain ATCC 25905 / DSM 1728 / JCM 9062 / NBRC 15155 / AMRC-C165).